Reading from the N-terminus, the 155-residue chain is MAPK regulated corepressor interacting protein 2 (155 aa).

Met-1 carries the N-acetylmethionine modification. Residues 1-59 (MYTITKGPSKLVAQRRTGPTQQQVESRLGELLKCRHSAPTPQHPRAQPPGPWPLSSPGP) form a disordered region. At Arg-35 the chain carries Omega-N-methylarginine. Pro residues predominate over residues 46 to 56 (AQPPGPWPLSS). Ser-56 is subject to Phosphoserine. An Omega-N-methylarginine modification is found at Arg-60. Ser-77 carries the post-translational modification Phosphoserine.

It belongs to the MCRIP family. In terms of assembly, interacts with DDX6. Interacts with MCRIP1.

It is found in the cytoplasm. The protein resides in the stress granule. The protein localises to the nucleus. The polypeptide is MAPK regulated corepressor interacting protein 2 (MCRIP2) (Bos taurus (Bovine)).